A 265-amino-acid chain; its full sequence is Indole-3-glycerol phosphate synthase (265 aa).

It belongs to the TrpC family.

The enzyme catalyses 1-(2-carboxyphenylamino)-1-deoxy-D-ribulose 5-phosphate + H(+) = (1S,2R)-1-C-(indol-3-yl)glycerol 3-phosphate + CO2 + H2O. The protein operates within amino-acid biosynthesis; L-tryptophan biosynthesis; L-tryptophan from chorismate: step 4/5. The sequence is that of Indole-3-glycerol phosphate synthase from Xanthomonas oryzae pv. oryzae (strain PXO99A).